A 399-amino-acid chain; its full sequence is Nicotinate phosphoribosyltransferase (399 aa).

The residue at position 224 (His224) is a Phosphohistidine; by autocatalysis.

The protein belongs to the NAPRTase family. In terms of processing, transiently phosphorylated on a His residue during the reaction cycle. Phosphorylation strongly increases the affinity for substrates and increases the rate of nicotinate D-ribonucleotide production. Dephosphorylation regenerates the low-affinity form of the enzyme, leading to product release.

It carries out the reaction nicotinate + 5-phospho-alpha-D-ribose 1-diphosphate + ATP + H2O = nicotinate beta-D-ribonucleotide + ADP + phosphate + diphosphate. The protein operates within cofactor biosynthesis; NAD(+) biosynthesis; nicotinate D-ribonucleotide from nicotinate: step 1/1. In terms of biological role, catalyzes the synthesis of beta-nicotinate D-ribonucleotide from nicotinate and 5-phospho-D-ribose 1-phosphate at the expense of ATP. The protein is Nicotinate phosphoribosyltransferase of Ectopseudomonas mendocina (strain ymp) (Pseudomonas mendocina).